The following is a 105-amino-acid chain: UPF0235 protein RF_1332 (105 aa).

It belongs to the UPF0235 family.

In Rickettsia felis (strain ATCC VR-1525 / URRWXCal2) (Rickettsia azadi), this protein is UPF0235 protein RF_1332.